The chain runs to 551 residues: HTH-type transcriptional regulator SgrR (551 aa).

The region spanning 1–116 (MPSARLQQQF…LVSHLGRSFR (116 aa)) is the HTH marR-type domain. Residues 26 to 49 (LNELAALLSCSRRHMRTLLNTMQD) constitute a DNA-binding region (H-T-H motif). The solute-binding stretch occupies residues 163-492 (ELEADIAHHW…IDWQADAARW (330 aa)).

Activates the small RNA gene sgrS under glucose-phosphate stress conditions as well as yfdZ. Represses its own transcription under both stress and non-stress conditions. Might act as a sensor of the intracellular accumulation of phosphoglucose by binding these molecules in its C-terminal solute-binding domain. This chain is HTH-type transcriptional regulator SgrR, found in Shigella flexneri serotype 5b (strain 8401).